Reading from the N-terminus, the 351-residue chain is Phosphate acyltransferase (351 aa).

Belongs to the PlsX family. Homodimer. Probably interacts with PlsY.

It localises to the cytoplasm. It catalyses the reaction a fatty acyl-[ACP] + phosphate = an acyl phosphate + holo-[ACP]. Its pathway is lipid metabolism; phospholipid metabolism. Functionally, catalyzes the reversible formation of acyl-phosphate (acyl-PO(4)) from acyl-[acyl-carrier-protein] (acyl-ACP). This enzyme utilizes acyl-ACP as fatty acyl donor, but not acyl-CoA. The polypeptide is Phosphate acyltransferase (Neisseria meningitidis serogroup C / serotype 2a (strain ATCC 700532 / DSM 15464 / FAM18)).